Reading from the N-terminus, the 311-residue chain is 4-hydroxy-tetrahydrodipicolinate synthase (311 aa).

T51 contacts pyruvate. The active-site Proton donor/acceptor is Y140. K168 serves as the catalytic Schiff-base intermediate with substrate. Residue I209 coordinates pyruvate.

Belongs to the DapA family. Homotetramer; dimer of dimers.

It is found in the cytoplasm. The enzyme catalyses L-aspartate 4-semialdehyde + pyruvate = (2S,4S)-4-hydroxy-2,3,4,5-tetrahydrodipicolinate + H2O + H(+). The protein operates within amino-acid biosynthesis; L-lysine biosynthesis via DAP pathway; (S)-tetrahydrodipicolinate from L-aspartate: step 3/4. In terms of biological role, catalyzes the condensation of (S)-aspartate-beta-semialdehyde [(S)-ASA] and pyruvate to 4-hydroxy-tetrahydrodipicolinate (HTPA). In Streptococcus pneumoniae (strain Taiwan19F-14), this protein is 4-hydroxy-tetrahydrodipicolinate synthase.